The sequence spans 442 residues: UDP-N-acetylmuramate--L-alanine ligase (442 aa).

109–115 (GAHGKTS) contributes to the ATP binding site.

It belongs to the MurCDEF family.

It is found in the cytoplasm. The catalysed reaction is UDP-N-acetyl-alpha-D-muramate + L-alanine + ATP = UDP-N-acetyl-alpha-D-muramoyl-L-alanine + ADP + phosphate + H(+). It functions in the pathway cell wall biogenesis; peptidoglycan biosynthesis. Its function is as follows. Cell wall formation. This is UDP-N-acetylmuramate--L-alanine ligase from Streptococcus pyogenes serotype M3 (strain SSI-1).